Reading from the N-terminus, the 137-residue chain is Large ribosomal subunit protein uL16 (137 aa).

This sequence belongs to the universal ribosomal protein uL16 family. In terms of assembly, part of the 50S ribosomal subunit.

Its function is as follows. Binds 23S rRNA and is also seen to make contacts with the A and possibly P site tRNAs. The chain is Large ribosomal subunit protein uL16 from Dinoroseobacter shibae (strain DSM 16493 / NCIMB 14021 / DFL 12).